Here is a 335-residue protein sequence, read N- to C-terminus: MKIGVIGSGSFGTALGSLLADKGYEVILWCRNDSQVESINRNHINNKHLPNFTLPEKLTASKDLRNVVQGKDMIVSSPPSHALSEVLREIKEYLPEKVPIVSASKGIENGTLRLVSEIFESELPEKYHSYLSYLSGPSFAKEIIQKVPTIVSIASKNETTARKVQEIFSFLYFRTYWTPDVIGVEVGGSLKNVIALAAGVSDGLGFGQNTRAALITRGLNEITKIGLKLGADPMTFLGPSGMGDLILTCCGEQSRNRTVGFRLGKGETLEQILSSMNEVAEGVKTTQSAYELSQKLGIEMAITNEVYKMLYEGKNPREVVKDLMKRDLKREGVSV.

4 residues coordinate NADPH: Ser10, Phe11, Arg31, and Lys105. 3 residues coordinate sn-glycerol 3-phosphate: Lys105, Gly136, and Ser138. Ala140 is a binding site for NADPH. Sn-glycerol 3-phosphate contacts are provided by Lys191, Asp244, Ser254, Arg255, and Asn256. Catalysis depends on Lys191, which acts as the Proton acceptor. Arg255 contributes to the NADPH binding site. Val279 and Glu281 together coordinate NADPH.

It belongs to the NAD-dependent glycerol-3-phosphate dehydrogenase family.

The protein resides in the cytoplasm. It catalyses the reaction sn-glycerol 3-phosphate + NAD(+) = dihydroxyacetone phosphate + NADH + H(+). The catalysed reaction is sn-glycerol 3-phosphate + NADP(+) = dihydroxyacetone phosphate + NADPH + H(+). It participates in membrane lipid metabolism; glycerophospholipid metabolism. Functionally, catalyzes the reduction of the glycolytic intermediate dihydroxyacetone phosphate (DHAP) to sn-glycerol 3-phosphate (G3P), the key precursor for phospholipid synthesis. The polypeptide is Glycerol-3-phosphate dehydrogenase [NAD(P)+] (Leptospira interrogans serogroup Icterohaemorrhagiae serovar Lai (strain 56601)).